The following is a 356-amino-acid chain: MMLFFSSLSDWFPGVSVFRYITFRTVAAMLTSGLIVFLFGPSIIASLKLRQGKGQPIRADGPQTHFKKAGTPTMGGLMILTGIVVSAFLWCNLSNIYFWVSLFVMLSFGMIGFYDDYLKVTKQTEKGFSGKARLSLEFLIAIIAAFVLLQVGSSGLALPFVKDYFINLSWFFLPFSAFVIVGTGNAVNLTDGLDGLAIVPVMVAALSFALIAYLSGNINFADYLQIHYVSGTGELAVLLGAVVGAGLGFLWFNAPPAAIFMGDTGSLALGGLLGIVAVATKHEIVLALIGGLFVLEGFSVVIQVGYFKLKKKRVFLMAPIHHHFEKKGWTESQVVIRFWIISIVLALVGLSTLKLR.

Helical transmembrane passes span 25 to 45 (TVAA…SIIA), 70 to 90 (GTPT…AFLW), 93 to 113 (LSNI…MIGF), 138 to 158 (FLIA…GLAL), 164 to 184 (YFIN…VGTG), 195 to 215 (GLAI…AYLS), 235 to 255 (LAVL…FNAP), 258 to 278 (AIFM…IVAV), 284 to 304 (IVLA…VIQV), and 333 to 353 (QVVI…LSTL).

It belongs to the glycosyltransferase 4 family. MraY subfamily. Mg(2+) serves as cofactor.

It localises to the cell inner membrane. The enzyme catalyses UDP-N-acetyl-alpha-D-muramoyl-L-alanyl-gamma-D-glutamyl-meso-2,6-diaminopimeloyl-D-alanyl-D-alanine + di-trans,octa-cis-undecaprenyl phosphate = di-trans,octa-cis-undecaprenyl diphospho-N-acetyl-alpha-D-muramoyl-L-alanyl-D-glutamyl-meso-2,6-diaminopimeloyl-D-alanyl-D-alanine + UMP. It participates in cell wall biogenesis; peptidoglycan biosynthesis. Functionally, catalyzes the initial step of the lipid cycle reactions in the biosynthesis of the cell wall peptidoglycan: transfers peptidoglycan precursor phospho-MurNAc-pentapeptide from UDP-MurNAc-pentapeptide onto the lipid carrier undecaprenyl phosphate, yielding undecaprenyl-pyrophosphoryl-MurNAc-pentapeptide, known as lipid I. This chain is Phospho-N-acetylmuramoyl-pentapeptide-transferase, found in Bartonella quintana (strain Toulouse) (Rochalimaea quintana).